Here is an 810-residue protein sequence, read N- to C-terminus: DNA gyrase subunit A (810 aa).

Residues L36–L502 enclose the Topo IIA-type catalytic domain. Residue Y124 is the O-(5'-phospho-DNA)-tyrosine intermediate of the active site. Residues Q529 to G535 carry the GyrA-box motif.

Belongs to the type II topoisomerase GyrA/ParC subunit family. Heterotetramer, composed of two GyrA and two GyrB chains. In the heterotetramer, GyrA contains the active site tyrosine that forms a transient covalent intermediate with DNA, while GyrB binds cofactors and catalyzes ATP hydrolysis.

The protein resides in the cytoplasm. The enzyme catalyses ATP-dependent breakage, passage and rejoining of double-stranded DNA.. In terms of biological role, a type II topoisomerase that negatively supercoils closed circular double-stranded (ds) DNA in an ATP-dependent manner to modulate DNA topology and maintain chromosomes in an underwound state. Negative supercoiling favors strand separation, and DNA replication, transcription, recombination and repair, all of which involve strand separation. Also able to catalyze the interconversion of other topological isomers of dsDNA rings, including catenanes and knotted rings. Type II topoisomerases break and join 2 DNA strands simultaneously in an ATP-dependent manner. The polypeptide is DNA gyrase subunit A (Borrelia hermsii (strain HS1 / DAH)).